An 85-amino-acid polypeptide reads, in one-letter code: CRISPR-associated endoribonuclease Cas2 (85 aa).

Aspartate 8 is a binding site for Mg(2+).

Belongs to the CRISPR-associated endoribonuclease Cas2 protein family. Homodimer, forms a heterotetramer with a Cas1 homodimer. Mg(2+) is required as a cofactor.

Its function is as follows. CRISPR (clustered regularly interspaced short palindromic repeat), is an adaptive immune system that provides protection against mobile genetic elements (viruses, transposable elements and conjugative plasmids). CRISPR clusters contain sequences complementary to antecedent mobile elements and target invading nucleic acids. CRISPR clusters are transcribed and processed into CRISPR RNA (crRNA). Functions as a ssRNA-specific endoribonuclease. Involved in the integration of spacer DNA into the CRISPR cassette. The polypeptide is CRISPR-associated endoribonuclease Cas2 (Thermococcus kodakarensis (strain ATCC BAA-918 / JCM 12380 / KOD1) (Pyrococcus kodakaraensis (strain KOD1))).